The sequence spans 78 residues: Probable [Fe-S]-dependent transcriptional repressor (78 aa).

4 residues coordinate iron-sulfur cluster: C56, C61, C64, and C70.

It belongs to the FeoC family.

Its function is as follows. May function as a transcriptional regulator that controls feoABC expression. The polypeptide is Probable [Fe-S]-dependent transcriptional repressor (Escherichia coli O7:K1 (strain IAI39 / ExPEC)).